The following is a 201-amino-acid chain: 3-isopropylmalate dehydratase small subunit (201 aa).

It belongs to the LeuD family. LeuD type 1 subfamily. In terms of assembly, heterodimer of LeuC and LeuD.

It carries out the reaction (2R,3S)-3-isopropylmalate = (2S)-2-isopropylmalate. It participates in amino-acid biosynthesis; L-leucine biosynthesis; L-leucine from 3-methyl-2-oxobutanoate: step 2/4. Catalyzes the isomerization between 2-isopropylmalate and 3-isopropylmalate, via the formation of 2-isopropylmaleate. The sequence is that of 3-isopropylmalate dehydratase small subunit from Shigella flexneri serotype 5b (strain 8401).